Reading from the N-terminus, the 251-residue chain is Flap endonuclease Xni (251 aa).

A Mg(2+)-binding site is contributed by aspartate 104. Residues 160–249 form the 5'-3' exonuclease domain; it reads VQPQQLPDYW…IDGNLQQLRL (90 aa). Residues leucine 171, alanine 172, proline 180, valine 182, and isoleucine 185 each coordinate K(+). Positions 184–189 are interaction with DNA; that stretch reads GIGPKS.

Belongs to the Xni family. It depends on Mg(2+) as a cofactor. The cofactor is K(+).

Its function is as follows. Has flap endonuclease activity. During DNA replication, flap endonucleases cleave the 5'-overhanging flap structure that is generated by displacement synthesis when DNA polymerase encounters the 5'-end of a downstream Okazaki fragment. This is Flap endonuclease Xni from Escherichia coli O6:K15:H31 (strain 536 / UPEC).